We begin with the raw amino-acid sequence, 484 residues long: Probable receptor-like protein kinase At5g18500 (484 aa).

The helical transmembrane segment at 21–41 (IIVIVLSAIFVVVLAISLWLT) threads the bilayer. The tract at residues 72 to 135 (RVDEVSSSNG…SVSSANPLTA (64 aa)) is disordered. Basic and acidic residues predominate over residues 91-105 (KFGDKEPEKGIKAES). The span at 125–134 (SSVSSANPLT) shows a compositional bias: polar residues. T155 carries the phosphothreonine modification. The Protein kinase domain maps to 166–445 (FSRDNIIGDG…MLESEEYPIA (280 aa)). ATP contacts are provided by residues 172-180 (IGDGGYGVV) and K194. Y239 is subject to Phosphotyrosine. Residue D292 is the Proton acceptor of the active site. S296 carries the post-translational modification Phosphoserine. Residues T326 and T331 each carry the phosphothreonine modification. Residue Y339 is modified to Phosphotyrosine. The disordered stretch occupies residues 425–484 (EKRPRMSQVARMLESEEYPIAREDRRRRRSQNGTTRDSDPPRNSTDTDKSEYHDLKPEGG). The segment covering 460-484 (RDSDPPRNSTDTDKSEYHDLKPEGG) has biased composition (basic and acidic residues).

The protein belongs to the protein kinase superfamily. Ser/Thr protein kinase family.

It localises to the cell membrane. It carries out the reaction L-seryl-[protein] + ATP = O-phospho-L-seryl-[protein] + ADP + H(+). It catalyses the reaction L-threonyl-[protein] + ATP = O-phospho-L-threonyl-[protein] + ADP + H(+). In Arabidopsis thaliana (Mouse-ear cress), this protein is Probable receptor-like protein kinase At5g18500.